The chain runs to 358 residues: MKLTVTLPTHSYDLTIETGALDKIGTWVRSLWQPQRVAIITDETVNKLYGAAVEKELQAAGFETSLIAVAAGEQSKSLETAQLLYDFLAEQQLTRSDGLIALGGGVVGDLAGFVASTYMRGIHFLQVPTTLLAQVDSSIGGKTAVNTKKAKNLVGTFAQPDGVLIDPNTLKTLEPRRVREGIAEIVKSAAIADVELWHRLSSLENEQDLVAHAEEIITACCKIKRDVVEEDELDLGLRLILNFGHTIGHALENTAGYGVIAHGEGVSLGMIQITQVAEQQGLSPLGTTQELVTMLEKFHLPVTTDRWSEERLYQAITHDKKTRGGQIKIIVLEKIGQAKIVSLPTEEIRAFLNREGGI.

Residues 105-109 (GVVGD), 129-130 (TT), Lys142, Lys151, and 169-172 (TLKT) each bind NAD(+). The Zn(2+) site is built by Glu184, His245, and His262.

This sequence belongs to the sugar phosphate cyclases superfamily. Dehydroquinate synthase family. The cofactor is NAD(+). It depends on Co(2+) as a cofactor. Requires Zn(2+) as cofactor.

The protein localises to the cytoplasm. It catalyses the reaction 7-phospho-2-dehydro-3-deoxy-D-arabino-heptonate = 3-dehydroquinate + phosphate. Its pathway is metabolic intermediate biosynthesis; chorismate biosynthesis; chorismate from D-erythrose 4-phosphate and phosphoenolpyruvate: step 2/7. In terms of biological role, catalyzes the conversion of 3-deoxy-D-arabino-heptulosonate 7-phosphate (DAHP) to dehydroquinate (DHQ). This is 3-dehydroquinate synthase from Enterococcus faecalis (strain ATCC 47077 / OG1RF).